The following is a 337-amino-acid chain: Protein hairy (337 aa).

The tract at residues 29 to 48 (KSDRRSNKPIMEKRRRARIN) is interaction with Topors. Residues 31–88 (DRRSNKPIMEKRRRARINNCLNELKTLILDATKKDPARHSKLEKADILEKTVKHLQEL) form the bHLH domain. The Orange domain maps to 107–136 (FKAGFADCVNEVSRFPGIEPAQRRRLLQHL). Disordered stretches follow at residues 146–178 (ELHQ…SQQG) and 259–311 (MPQR…VIQR). Residues 263-301 (TASTGSASSHSSAGYESAPGSSSSCSYAPPSPANSSYEP) are compositionally biased toward low complexity. Positions 334 to 337 (WRPW) match the WRPW motif motif.

Transcription repression requires formation of a complex with a corepressor protein (Groucho). Interacts with gro (via WPRW motif) and Topors. Post-translationally, ubiquitinated by Topors.

It localises to the nucleus. Pair-rule protein that regulates embryonic segmentation and adult bristle patterning. Transcriptional repressor of genes that require a bHLH protein for their transcription (e.g. ftz). The polypeptide is Protein hairy (Drosophila melanogaster (Fruit fly)).